The primary structure comprises 436 residues: Exodeoxyribonuclease 7 large subunit (436 aa).

The segment at 412–436 (PGGVMNKNSNTTDSTDNTENGTGEA) is disordered. Residues 417-436 (NKNSNTTDSTDNTENGTGEA) are compositionally biased toward low complexity.

Belongs to the XseA family. As to quaternary structure, heterooligomer composed of large and small subunits.

The protein resides in the cytoplasm. The enzyme catalyses Exonucleolytic cleavage in either 5'- to 3'- or 3'- to 5'-direction to yield nucleoside 5'-phosphates.. In terms of biological role, bidirectionally degrades single-stranded DNA into large acid-insoluble oligonucleotides, which are then degraded further into small acid-soluble oligonucleotides. This Corynebacterium jeikeium (strain K411) protein is Exodeoxyribonuclease 7 large subunit.